The primary structure comprises 209 residues: N-(5'-phosphoribosyl)anthranilate isomerase (209 aa).

This sequence belongs to the TrpF family.

The enzyme catalyses N-(5-phospho-beta-D-ribosyl)anthranilate = 1-(2-carboxyphenylamino)-1-deoxy-D-ribulose 5-phosphate. It participates in amino-acid biosynthesis; L-tryptophan biosynthesis; L-tryptophan from chorismate: step 3/5. The chain is N-(5'-phosphoribosyl)anthranilate isomerase from Staphylococcus carnosus (strain TM300).